The chain runs to 663 residues: Protein-arginine deiminase type-1 (663 aa).

14 residues coordinate Ca(2+): Asn153, Asp155, Asp157, Asp165, Asp176, Asp179, Gln351, Glu353, Lys364, Asp371, Ser372, Asn375, Phe409, and Leu412. Cys645 functions as the Nucleophile in the catalytic mechanism.

The protein belongs to the protein arginine deiminase family. Monomer. Ca(2+) is required as a cofactor. Detected in epidermal keratinocytes (at protein level). Epidermis, prostate, testis, placenta, spleen and thymus.

The protein localises to the cytoplasm. It catalyses the reaction L-arginyl-[protein] + H2O = L-citrullyl-[protein] + NH4(+). Catalyzes the deimination of arginine residues of proteins. This is Protein-arginine deiminase type-1 (PADI1) from Homo sapiens (Human).